The following is a 318-amino-acid chain: Porphobilinogen deaminase (318 aa).

Cys241 carries the post-translational modification S-(dipyrrolylmethanemethyl)cysteine.

Belongs to the HMBS family. As to quaternary structure, monomer. The cofactor is dipyrromethane.

The catalysed reaction is 4 porphobilinogen + H2O = hydroxymethylbilane + 4 NH4(+). It participates in porphyrin-containing compound metabolism; protoporphyrin-IX biosynthesis; coproporphyrinogen-III from 5-aminolevulinate: step 2/4. Functionally, tetrapolymerization of the monopyrrole PBG into the hydroxymethylbilane pre-uroporphyrinogen in several discrete steps. The protein is Porphobilinogen deaminase of Citrifermentans bemidjiense (strain ATCC BAA-1014 / DSM 16622 / JCM 12645 / Bem) (Geobacter bemidjiensis).